The following is an 895-amino-acid chain: Stonin-2 (895 aa).

Disordered regions lie at residues 15 to 119, 145 to 222, and 234 to 280; these read WVSF…PPHK, SESS…APPV, and EDNE…KSTL. Positions 64–73 are enriched in basic and acidic residues; the sequence is SHSEQDDSSE. Residues 145–193 are compositionally biased toward polar residues; it reads SESSWTTHSEDTSSPSVAPSYTDLQLINTEEQASGRASGTDSTDNSSSL. Positions 241–251 are enriched in pro residues; sequence PSPPVPSPKKP. Thr253 carries the post-translational modification Phosphothreonine. Residues Ser278 and Ser299 each carry the phosphoserine modification. 2 consecutive short sequence motifs (NPF) follow at residues 310 to 312 and 326 to 328; these read NPF. Residues 386 to 421 form a disordered region; it reads QIDDPDPVGNTALPDDDPTASVELDAPSPASALSQP. An SHD domain is found at 424 to 557; the sequence is GWPMMLRIPE…DLPVLSMDLS (134 aa). An MHD domain is found at 565 to 872; sequence EEEITVDVRD…AHYSYKVEIE (308 aa). Ser759 carries the post-translational modification Phosphoserine.

This sequence belongs to the Stoned B family. As to quaternary structure, interacts with the second C2 domain of synaptotagmins SYT1 and SYT2. Interacts with EPS15, EPS15R and ITSN1. Interacts indirectly with the AP-2 adapter complex. Interacts with TOR1A and COPS4; the interaction controls STON2 protein stability. Phosphorylated in vitro by PKD. Post-translationally, neddylated; deneddylated via its interaction with the COP9 signalosome (CSN) complex through TOR1A and COPS4. In terms of processing, ubiquitinated; leading to its degradation.

It is found in the cytoplasm. The protein localises to the membrane. Its subcellular location is the synapse. It localises to the synaptosome. Functionally, adapter protein involved in endocytic machinery. Involved in the synaptic vesicle recycling. May facilitate clathrin-coated vesicle uncoating. The sequence is that of Stonin-2 (Ston2) from Mus musculus (Mouse).